We begin with the raw amino-acid sequence, 96 residues long: Co-chaperonin GroES (96 aa).

Belongs to the GroES chaperonin family. Heptamer of 7 subunits arranged in a ring. Interacts with the chaperonin GroEL.

The protein resides in the cytoplasm. Its function is as follows. Together with the chaperonin GroEL, plays an essential role in assisting protein folding. The GroEL-GroES system forms a nano-cage that allows encapsulation of the non-native substrate proteins and provides a physical environment optimized to promote and accelerate protein folding. GroES binds to the apical surface of the GroEL ring, thereby capping the opening of the GroEL channel. This is Co-chaperonin GroES from Vibrio atlanticus (strain LGP32) (Vibrio splendidus (strain Mel32)).